Reading from the N-terminus, the 327-residue chain is Protein hunchback (327 aa).

C2H2-type zinc fingers lie at residues 1–5 (HMRNH), 11–33 (FQCS…LKSH), and 39–63 (YRCA…KYQH). 3 disordered regions span residues 91–121 (KQKP…HPIF), 143–170 (PPNN…MSPP), and 182–290 (ERPL…EVAS). 2 stretches are compositionally biased toward basic and acidic residues: residues 205-216 (THREMPTEHGDD) and 265-276 (LQHEDEKMRDAD). 2 C2H2-type zinc fingers span residues 297-319 (YTCQ…MGFH) and 325-327 (FMC).

It belongs to the hunchback C2H2-type zinc-finger protein family.

The protein resides in the nucleus. In terms of biological role, gap class segmentation protein that controls development of head structures. The sequence is that of Protein hunchback (hb) from Manduca sexta (Tobacco hawkmoth).